The following is a 364-amino-acid chain: tRNA-specific 2-thiouridylase MnmA (364 aa).

ATP-binding positions include 6–13 (AMSGGVDS) and Leu32. Residue Cys101 is the Nucleophile of the active site. Cysteines 101 and 193 form a disulfide. Gly125 is a binding site for ATP. The interval 143 to 145 (KDQ) is interaction with tRNA. Cys193 acts as the Cysteine persulfide intermediate in catalysis.

The protein belongs to the MnmA/TRMU family.

It localises to the cytoplasm. The enzyme catalyses S-sulfanyl-L-cysteinyl-[protein] + uridine(34) in tRNA + AH2 + ATP = 2-thiouridine(34) in tRNA + L-cysteinyl-[protein] + A + AMP + diphosphate + H(+). Catalyzes the 2-thiolation of uridine at the wobble position (U34) of tRNA, leading to the formation of s(2)U34. This chain is tRNA-specific 2-thiouridylase MnmA, found in Rhodococcus opacus (strain B4).